Here is a 118-residue protein sequence, read N- to C-terminus: Basic phospholipase A2 PA-10A (118 aa).

Intrachain disulfides connect Cys11–Cys71, Cys27–Cys117, Cys29–Cys45, Cys44–Cys98, Cys51–Cys91, Cys60–Cys84, and Cys78–Cys89. Residues Tyr28, Gly30, and Gly32 each coordinate Ca(2+). His48 is a catalytic residue. Residue Asp49 coordinates Ca(2+). Asp92 is an active-site residue.

It belongs to the phospholipase A2 family. Group I subfamily. D49 sub-subfamily. The cofactor is Ca(2+). Expressed by the venom gland.

It localises to the secreted. The enzyme catalyses a 1,2-diacyl-sn-glycero-3-phosphocholine + H2O = a 1-acyl-sn-glycero-3-phosphocholine + a fatty acid + H(+). In terms of biological role, PLA2 catalyzes the calcium-dependent hydrolysis of the 2-acyl groups in 3-sn-phosphoglycerides. This is Basic phospholipase A2 PA-10A from Pseudechis australis (Mulga snake).